Here is a 468-residue protein sequence, read N- to C-terminus: Na(+)/H(+) antiporter NhaA (468 aa).

A run of 10 helical transmembrane segments spans residues 32–52 (FLHIEAVSGIVLLAAAGIALL), 83–103 (LHFWINDALMTIFFLVVGMEI), 119–139 (ALPMAAALGGVIVPALIYLAI), 148–168 (GWAVPTATDIAFAVGVLALLG), 178–198 (FLLALAIIDDIVAVLIIAVAF), 205–225 (GGFLVAGTGILMVLGLQWIGV), 320–340 (ALHPWVAYLVMPLFALANAGV), 354–374 (GAMFGVVLALVVGKPLGIVSV), 397–417 (LVGLLAGIGFTMSIFIATLAF), and 428–448 (LGVLLASAIAATIGLTWGFIY).

Belongs to the NhaA Na(+)/H(+) (TC 2.A.33) antiporter family.

The protein resides in the cell inner membrane. It catalyses the reaction Na(+)(in) + 2 H(+)(out) = Na(+)(out) + 2 H(+)(in). In terms of biological role, na(+)/H(+) antiporter that extrudes sodium in exchange for external protons. In Cupriavidus necator (strain ATCC 17699 / DSM 428 / KCTC 22496 / NCIMB 10442 / H16 / Stanier 337) (Ralstonia eutropha), this protein is Na(+)/H(+) antiporter NhaA.